We begin with the raw amino-acid sequence, 191 residues long: Protein YceI (191 aa).

An N-terminal signal peptide occupies residues 1–22; sequence MKKSLLGLTFASLMFSAGSAVA.

It belongs to the UPF0312 family. Type 1 subfamily.

The protein resides in the periplasm. This chain is Protein YceI, found in Shigella boydii serotype 4 (strain Sb227).